The chain runs to 249 residues: Granaticin polyketide synthase putative ketoacyl reductase 2 (249 aa).

12 to 36 (LVTGSSSGIGQTVAQRLAAEGYRVV) contributes to the NAD(+) binding site. Residue Ser-144 coordinates substrate. Tyr-157 serves as the catalytic Proton acceptor.

The protein belongs to the short-chain dehydrogenases/reductases (SDR) family.

It functions in the pathway antibiotic biosynthesis; granaticin biosynthesis. The chain is Granaticin polyketide synthase putative ketoacyl reductase 2 (gra-orf6) from Streptomyces violaceoruber.